We begin with the raw amino-acid sequence, 448 residues long: Asparagine--tRNA ligase (448 aa).

It belongs to the class-II aminoacyl-tRNA synthetase family. As to quaternary structure, homodimer.

The protein resides in the cytoplasm. The enzyme catalyses tRNA(Asn) + L-asparagine + ATP = L-asparaginyl-tRNA(Asn) + AMP + diphosphate + H(+). This is Asparagine--tRNA ligase from Streptococcus thermophilus (strain ATCC BAA-250 / LMG 18311).